A 377-amino-acid chain; its full sequence is Histidinol-phosphate aminotransferase (377 aa).

N6-(pyridoxal phosphate)lysine is present on K230.

Belongs to the class-II pyridoxal-phosphate-dependent aminotransferase family. Histidinol-phosphate aminotransferase subfamily. Homodimer. The cofactor is pyridoxal 5'-phosphate.

The catalysed reaction is L-histidinol phosphate + 2-oxoglutarate = 3-(imidazol-4-yl)-2-oxopropyl phosphate + L-glutamate. It functions in the pathway amino-acid biosynthesis; L-histidine biosynthesis; L-histidine from 5-phospho-alpha-D-ribose 1-diphosphate: step 7/9. The protein is Histidinol-phosphate aminotransferase of Mycobacterium leprae (strain Br4923).